A 213-amino-acid polypeptide reads, in one-letter code: Endonuclease III (213 aa).

The HhH domain occupies 108–127; the sequence is FKELIKLPGVGRKTANVVLN. [4Fe-4S] cluster-binding residues include cysteine 187, cysteine 194, cysteine 197, and cysteine 203.

This sequence belongs to the Nth/MutY family. It depends on [4Fe-4S] cluster as a cofactor.

The catalysed reaction is 2'-deoxyribonucleotide-(2'-deoxyribose 5'-phosphate)-2'-deoxyribonucleotide-DNA = a 3'-end 2'-deoxyribonucleotide-(2,3-dehydro-2,3-deoxyribose 5'-phosphate)-DNA + a 5'-end 5'-phospho-2'-deoxyribonucleoside-DNA + H(+). DNA repair enzyme that has both DNA N-glycosylase activity and AP-lyase activity. The DNA N-glycosylase activity releases various damaged pyrimidines from DNA by cleaving the N-glycosidic bond, leaving an AP (apurinic/apyrimidinic) site. The AP-lyase activity cleaves the phosphodiester bond 3' to the AP site by a beta-elimination, leaving a 3'-terminal unsaturated sugar and a product with a terminal 5'-phosphate. The protein is Endonuclease III of Rickettsia felis (strain ATCC VR-1525 / URRWXCal2) (Rickettsia azadi).